Reading from the N-terminus, the 328-residue chain is Arylacetonitrilase (328 aa).

The CN hydrolase domain maps to 5 to 278; sequence VRVAVTQAEP…EGIIYADLDF (274 aa). Glutamate 45 serves as the catalytic Proton acceptor. Lysine 125 is a catalytic residue. The active-site Nucleophile is cysteine 160.

This sequence belongs to the carbon-nitrogen hydrolase superfamily. Nitrilase family.

The enzyme catalyses a nitrile + 2 H2O = a carboxylate + NH4(+). It carries out the reaction 4-chlorophenylacetonitrile + 2 H2O = 4-chlorophenylacetate + NH4(+). Nitrilase that hydrolyzes preferentially phenylacetonitrile, (R,S)-mandelonitrile, and 3-indolylacetonitrile. The chain is Arylacetonitrilase from Aspergillus niger (strain ATCC MYA-4892 / CBS 513.88 / FGSC A1513).